A 25-amino-acid polypeptide reads, in one-letter code: Aurein-5.1 (25 aa).

The protein belongs to the frog skin active peptide (FSAP) family. Aurein subfamily. As to expression, expressed by the skin dorsal glands.

The protein resides in the secreted. Has no antimicrobial or anticancer activity. The chain is Aurein-5.1 from Ranoidea aurea (Green and golden bell frog).